The chain runs to 80 residues: U6 snRNA-associated Sm-like protein LSm6 (80 aa).

The Sm domain maps to 7–79; it reads TPSDFLKQII…VLYISTQKRR (73 aa). Position 59 is an N6-acetyllysine (Lys-59).

The protein belongs to the snRNP Sm proteins family. SmF/LSm6 subfamily. Component of the precatalytic spliceosome (spliceosome B complex). Component of the U4/U6-U5 tri-snRNP complex, a building block of the precatalytic spliceosome (spliceosome B complex). The U4/U6-U5 tri-snRNP complex is composed of the U4, U6 and U5 snRNAs and at least PRPF3, PRPF4, PRPF6, PRPF8, PRPF31, SNRNP200, TXNL4A, SNRNP40, SNRPB, SNRPD1, SNRPD2, SNRPD3, SNRPE, SNRPF, SNRPG, DDX23, CD2BP2, PPIH, SNU13, EFTUD2, SART1 and USP39, plus LSM2, LSM3, LSM4, LSM5, LSM6, LSM7 and LSM8. LSM2, LSM3, LSM4, LSM5, LSM6, LSM7 and LSM8 form a heptameric, ring-shaped subcomplex (the LSM2-8 complex) that is part of the U4/U6-U5 tri-snRNP complex and the precatalytic spliceosome. Component of the heptameric LSM1-LSM7 complex, which consists of LSM1, LSM2, LSM3, LSM4, LSM5, LSM6 and LSM7.

It is found in the cytoplasm. It localises to the nucleus. In terms of biological role, plays a role in pre-mRNA splicing as component of the U4/U6-U5 tri-snRNP complex that is involved in spliceosome assembly, and as component of the precatalytic spliceosome (spliceosome B complex). The heptameric LSM2-8 complex binds specifically to the 3'-terminal U-tract of U6 snRNA. Component of LSm protein complexes, which are involved in RNA processing and may function in a chaperone-like manner, facilitating the efficient association of RNA processing factors with their substrates. Component of the cytoplasmic LSM1-LSM7 complex, which is thought to be involved in mRNA degradation by activating the decapping step in the 5'-to-3' mRNA decay pathway. This chain is U6 snRNA-associated Sm-like protein LSm6 (LSM6), found in Homo sapiens (Human).